Reading from the N-terminus, the 121-residue chain is Probable K(+)/H(+) antiporter subunit G (121 aa).

3 helical membrane-spanning segments follow: residues 10–32 (WAAL…GSLG), 45–67 (APTI…CFAV), and 72–94 (WVFH…LMLL).

This sequence belongs to the CPA3 antiporters (TC 2.A.63) subunit G family. As to quaternary structure, may form a hetero-oligomeric complex that consists of six subunits: PhaAB, PhaC, PhaD, PhaE, PhaF and PhaG.

Its subcellular location is the cell membrane. Part of a K(+) efflux system which is required for the adaptation of R.meliloti to alkaline pH as well as for the infection process during symbiotic nodule development. This Rhizobium meliloti (strain 1021) (Ensifer meliloti) protein is Probable K(+)/H(+) antiporter subunit G (phaG).